The primary structure comprises 288 residues: 33 kDa chaperonin (288 aa).

2 cysteine pairs are disulfide-bonded: cysteine 235-cysteine 237 and cysteine 268-cysteine 271.

It belongs to the HSP33 family. Post-translationally, under oxidizing conditions two disulfide bonds are formed involving the reactive cysteines. Under reducing conditions zinc is bound to the reactive cysteines and the protein is inactive.

The protein resides in the cytoplasm. In terms of biological role, redox regulated molecular chaperone. Protects both thermally unfolding and oxidatively damaged proteins from irreversible aggregation. Plays an important role in the bacterial defense system toward oxidative stress. The sequence is that of 33 kDa chaperonin from Streptococcus thermophilus (strain CNRZ 1066).